We begin with the raw amino-acid sequence, 129 residues long: Fluoride-specific ion channel FluC 2 (129 aa).

4 helical membrane-spanning segments follow: residues leucine 4–glycine 24, threonine 39–valine 59, tyrosine 65–serine 85, and valine 104–leucine 124. Residues glycine 79 and threonine 82 each coordinate Na(+).

It belongs to the fluoride channel Fluc/FEX (TC 1.A.43) family.

It localises to the cell inner membrane. It carries out the reaction fluoride(in) = fluoride(out). Its activity is regulated as follows. Na(+) is not transported, but it plays an essential structural role and its presence is essential for fluoride channel function. Functionally, fluoride-specific ion channel. Important for reducing fluoride concentration in the cell, thus reducing its toxicity. The protein is Fluoride-specific ion channel FluC 2 of Brucella abortus biovar 1 (strain 9-941).